Reading from the N-terminus, the 369-residue chain is 3-dehydroquinate synthase (369 aa).

Residues 75–80 (DGEEHK), 109–113 (GVIGD), 133–134 (TT), Lys146, Lys155, and 173–176 (TLKT) each bind NAD(+). Residues Glu188, His251, and His268 each coordinate Zn(2+).

It belongs to the sugar phosphate cyclases superfamily. Dehydroquinate synthase family. The cofactor is Co(2+). It depends on Zn(2+) as a cofactor. Requires NAD(+) as cofactor.

The protein localises to the cytoplasm. It carries out the reaction 7-phospho-2-dehydro-3-deoxy-D-arabino-heptonate = 3-dehydroquinate + phosphate. It functions in the pathway metabolic intermediate biosynthesis; chorismate biosynthesis; chorismate from D-erythrose 4-phosphate and phosphoenolpyruvate: step 2/7. In terms of biological role, catalyzes the conversion of 3-deoxy-D-arabino-heptulosonate 7-phosphate (DAHP) to dehydroquinate (DHQ). This is 3-dehydroquinate synthase from Legionella pneumophila subsp. pneumophila (strain Philadelphia 1 / ATCC 33152 / DSM 7513).